The chain runs to 349 residues: Protein O-mannose kinase (349 aa).

At 1-19 (MGQQHGTRNGLTHRELPRG) the chain is on the cytoplasmic side. A helical; Signal-anchor for type II membrane protein transmembrane segment spans residues 20–42 (VGLLLAMALMNVALYLCLDQLFI). At 43-349 (SPGRSTADSR…TVMSQTKEML (307 aa)) the chain is on the lumenal side. 3 N-linked (GlcNAc...) asparagine glycosylation sites follow: N66, N164, and N219. The Protein kinase domain maps to 80–349 (VRQLKRVGEG…TVMSQTKEML (270 aa)).

This sequence belongs to the protein kinase superfamily. Ser/Thr protein kinase family. STKL subfamily.

The protein localises to the endoplasmic reticulum membrane. It catalyses the reaction 3-O-[beta-D-GalNAc-(1-&gt;3)-beta-D-GlcNAc-(1-&gt;4)-alpha-D-Man]-L-Thr-[protein] + ATP = 3-O-[beta-D-GalNAc-(1-&gt;3)-beta-D-GlcNAc-(1-&gt;4)-(O-6-P-alpha-D-Man)]-Thr-[protein] + ADP + H(+). Protein O-mannose kinase that specifically mediates phosphorylation at the 6-position of an O-mannose of the trisaccharide (N-acetylgalactosamine (GalNAc)-beta-1,3-N-acetylglucosamine (GlcNAc)-beta-1,4-mannose) to generate phosphorylated O-mannosyl trisaccharide (N-acetylgalactosamine-beta-1,3-N-acetylglucosamine-beta-1,4-(phosphate-6-)mannose). Phosphorylated O-mannosyl trisaccharide is a carbohydrate structure present in alpha-dystroglycan (DAG1), which is required for binding laminin G-like domain-containing extracellular proteins with high affinity. Only shows kinase activity when the GalNAc-beta-3-GlcNAc-beta-terminus is linked to the 4-position of O-mannose, suggesting that this disaccharide serves as the substrate recognition motif. The chain is Protein O-mannose kinase (Pomk) from Mus musculus (Mouse).